Here is a 156-residue protein sequence, read N- to C-terminus: Histone H2B.2 (156 aa).

Basic and acidic residues-rich tracts occupy residues 1–10 (MAPKKDEKPA) and 24–58 (AKAE…GEKK). The interval 1–63 (MAPKKDEKPA…DGEKKDKKKK (63 aa)) is disordered. N6-acetyllysine is present on residues Lys-40 and Lys-41. Lys-152 participates in a covalent cross-link: Glycyl lysine isopeptide (Lys-Gly) (interchain with G-Cter in ubiquitin).

Belongs to the histone H2B family. The nucleosome is a histone octamer containing two molecules each of H2A, H2B, H3 and H4 assembled in one H3-H4 heterotetramer and two H2A-H2B heterodimers. The octamer wraps approximately 147 bp of DNA. Post-translationally, the N-terminus is blocked. Can be acetylated to form H2BK33ac and H2BK34ac. Acetylated mainly on the ubiquitinated form. In terms of processing, monoubiquitinated to form H2BK143ub1; which is increased during the light period and may give a specific tag for epigenetic transcriptional activation.

The protein localises to the nucleus. Its subcellular location is the chromosome. In terms of biological role, core component of nucleosome. Nucleosomes wrap and compact DNA into chromatin, limiting DNA accessibility to the cellular machineries which require DNA as a template. Histones thereby play a central role in transcription regulation, DNA repair, DNA replication and chromosomal stability. DNA accessibility is regulated via a complex set of post-translational modifications of histones, also called histone code, and nucleosome remodeling. The sequence is that of Histone H2B.2 from Chlamydomonas reinhardtii (Chlamydomonas smithii).